The chain runs to 336 residues: D-alanine--D-alanine ligase (336 aa).

In terms of domain architecture, ATP-grasp spans 124–330 (KMWFSALGIP…FTEYLSLVIN (207 aa)). 154–209 (ALENWGSIFVKAASQGSSVGCYKVDDSSKVAGVLKDAFGYAPYVIVEKTIKARELE) lines the ATP pocket. Mg(2+)-binding residues include D284, E297, and N299.

Belongs to the D-alanine--D-alanine ligase family. Requires Mg(2+) as cofactor. Mn(2+) serves as cofactor.

The protein localises to the cytoplasm. The catalysed reaction is 2 D-alanine + ATP = D-alanyl-D-alanine + ADP + phosphate + H(+). The protein operates within cell wall biogenesis; peptidoglycan biosynthesis. Its function is as follows. Cell wall formation. This Shewanella sp. (strain MR-4) protein is D-alanine--D-alanine ligase.